The following is a 609-amino-acid chain: Kelch-like protein 20 (609 aa).

The 68-residue stretch at 68-135 folds into the BTB domain; sequence CDVVLVVGAK…AYTSQITVEE (68 aa). In terms of domain architecture, BACK spans 170–272; it reads CLGIRAFADT…SPKFLVGTVG (103 aa). Kelch repeat units follow at residues 319 to 365, 367 to 413, 414 to 460, 462 to 507, 509 to 554, and 556 to 601; these read VLFA…VLDD, LYAV…VLGG, FLYA…VLGG, LYAV…VYQD, IYAV…VVNG, and LMAV…VIKM.

Component of the BCR(KLHL20) E3 ubiquitin ligase complex, at least composed of CUL3, KLHL20 and RBX1. Interacts with PDZ-RhoGEF/ARHGEF11, DAPK1, PML and CORO7. Interacts with F-actin. Interacts with IFN-gamma (IFNG). Interacts (via kelch repeats) with IVNS1ABP (via kelch repeats); this interaction blocks the assembly of CUL3-KLHL20 complex.

It is found in the cytoplasm. The protein resides in the perinuclear region. It localises to the nucleus. Its subcellular location is the golgi apparatus. The protein localises to the trans-Golgi network. It is found in the cell projection. The protein resides in the axon. It localises to the dendrite. It functions in the pathway protein modification; protein ubiquitination. In terms of biological role, substrate-specific adapter of a BCR (BTB-CUL3-RBX1) E3 ubiquitin-protein ligase complex involved in interferon response and anterograde Golgi to endosome transport. The BCR(KLHL20) E3 ubiquitin ligase complex mediates the ubiquitination of DAPK1, leading to its degradation by the proteasome, thereby acting as a negative regulator of apoptosis. The BCR(KLHL20) E3 ubiquitin ligase complex also specifically mediates 'Lys-33'-linked ubiquitination. Involved in anterograde Golgi to endosome transport by mediating 'Lys-33'-linked ubiquitination of CORO7, promoting interaction between CORO7 and EPS15, thereby facilitating actin polymerization and post-Golgi trafficking. Also acts as a regulator of endothelial migration during angiogenesis by controlling the activation of Rho GTPases. The BCR(KLHL20) E3 ubiquitin ligase complex acts as a regulator of neurite outgrowth by mediating ubiquitination and degradation of PDZ-RhoGEF/ARHGEF11. In Pongo abelii (Sumatran orangutan), this protein is Kelch-like protein 20 (KLHL20).